The sequence spans 580 residues: MKENKENSSPSVTSANLDHTKPCWYWDKKDLAHTPSQLEGLDPATEARYRREGARFIFDVGTRLGLHYDTLATGIIYFHRFYMFHSFKQFPRYVTGACCLFLAGKVEETPKKCKDIIKTARSLLNDVQFGQFGDDPKEEVMVLERILLQTIKFDLQVEHPYQFLLKYAKQLKGDKNKIQKLVQMAWTFVNDSLCTTLSLQWEPEIIAVAVMYLAGRLCKFEIQEWTSKPMYRRWWEQFVQDVPVDVLEDICHQILDLYSQGKQQMPHHTPHQLQQPPSLQPTPQVPQVQQSQPSQSSEPSQPQQKDPQQPAQQQQPAQQPKKPSPQPSSPRQVKRAVVVSPKEENKAAEPPPPKIPKIETTHPPLPPAHPPPDRKPPLAAALGEAEPPGPVDATDLPKVQIPPPAHPAPVHQPPPLPHRPPPPPPSSYMTGMSTTSSYMSGEGYQSLQSMMKTEGPSYGALPPAYGPPAHLPYHPHVYPPNPPPPPVPPPPASFPPPAIPPPTPGYPPPPPTYNPNFPPPPPRLPPTHAVPPHPPPGLGLPPASYPPPAVPPGGQPPVPPPIPPPGMPPVGGLGRAAWMR.

Residues 262–580 (KQQMPHHTPH…GGLGRAAWMR (319 aa)) are disordered. 2 stretches are compositionally biased toward low complexity: residues 263-277 (QQMP…QQPP) and 285-321 (VPQV…QQPK). Residues serine 324, serine 328, serine 329, and serine 340 each carry the phosphoserine modification. Positions 377 to 386 (PLAAALGEAE) are enriched in low complexity. Residues 400–426 (QIPPPAHPAPVHQPPPLPHRPPPPPPS) show a composition bias toward pro residues. A compositionally biased stretch (low complexity) spans 427 to 444 (SYMTGMSTTSSYMSGEGY). The span at 477-568 (VYPPNPPPPP…PPPIPPPGMP (92 aa)) shows a compositional bias: pro residues.

It belongs to the cyclin family. Cyclin C subfamily. In terms of assembly, regulatory subunit of cyclin-dependent kinases. Identified in a complex with a kinase and the RNA polymerase II holoenzyme. Interacts with POLR2A. Interacts with CDK12 and CDK13. Interacts with CDK9 according to PubMed:10574912; does not interact with CDK9 according to PubMed:22012619. (Microbial infection) Interacts with human herpes virus 1 (HHV-1) transcriptional regulator ICP22. Widely expressed. Highest levels in testis.

It localises to the nucleus. Regulatory subunit of cyclin-dependent kinases that mediates activation of target kinases. Plays a role in transcriptional regulation via its role in regulating the phosphorylation of the C-terminal domain (CTD) of the large subunit of RNA polymerase II (POLR2A). This chain is Cyclin-K (CCNK), found in Homo sapiens (Human).